A 365-amino-acid polypeptide reads, in one-letter code: Carbamoyl phosphate synthase small chain (365 aa).

2 CPSase regions span residues 1–166 (MKRQ…PSPG) and 1–169 (MKRQ…GRGH). The L-glutamine site is built by S45, G218, and G220. The Glutamine amidotransferase type-1 domain maps to 170–357 (RVVLVDFGMK…LTMIENFKKE (188 aa)). C245 serves as the catalytic Nucleophile. Residues L246, Q249, N287, G289, and Y290 each contribute to the L-glutamine site. Residues H330 and E332 contribute to the active site.

This sequence belongs to the CarA family. In terms of assembly, composed of two chains; the small (or glutamine) chain promotes the hydrolysis of glutamine to ammonia, which is used by the large (or ammonia) chain to synthesize carbamoyl phosphate. Tetramer of heterodimers (alpha,beta)4.

The enzyme catalyses hydrogencarbonate + L-glutamine + 2 ATP + H2O = carbamoyl phosphate + L-glutamate + 2 ADP + phosphate + 2 H(+). It catalyses the reaction L-glutamine + H2O = L-glutamate + NH4(+). It functions in the pathway amino-acid biosynthesis; L-arginine biosynthesis; carbamoyl phosphate from bicarbonate: step 1/1. It participates in pyrimidine metabolism; UMP biosynthesis via de novo pathway; (S)-dihydroorotate from bicarbonate: step 1/3. In terms of biological role, small subunit of the glutamine-dependent carbamoyl phosphate synthetase (CPSase). CPSase catalyzes the formation of carbamoyl phosphate from the ammonia moiety of glutamine, carbonate, and phosphate donated by ATP, constituting the first step of 2 biosynthetic pathways, one leading to arginine and/or urea and the other to pyrimidine nucleotides. The small subunit (glutamine amidotransferase) binds and cleaves glutamine to supply the large subunit with the substrate ammonia. This Bacillus cereus (strain ATCC 14579 / DSM 31 / CCUG 7414 / JCM 2152 / NBRC 15305 / NCIMB 9373 / NCTC 2599 / NRRL B-3711) protein is Carbamoyl phosphate synthase small chain.